The following is a 497-amino-acid chain: Ammonium transporter Rh type C (497 aa).

Topologically, residues 1–9 (MAWNTNLRG) are cytoplasmic. The helical transmembrane segment at 10–30 (RLPITCLILQVTMVVLFGVFV) threads the bilayer. The Extracellular segment spans residues 31 to 61 (RYDIQADAHWWLEKKRKNISSDVENEFYYRY). An N-linked (GlcNAc...) asparagine glycan is attached at Asn-48. Residues 62-82 (PSFEDVHAMVFVGFGFLMTYL) form a helical membrane-spanning segment. Over 83-93 (QRYGFSAVGFN) the chain is Cytoplasmic. The helical transmembrane segment at 94 to 114 (FLLAAFGIQWALLMQGWFHFF) threads the bilayer. At 115-125 (EEGHILLSVEN) the chain is on the extracellular side. The chain crosses the membrane as a helical span at residues 126–145 (LIQADFCVASTCVAFGAVLG). Topologically, residues 146–151 (KISPMQ) are cytoplasmic. Residues 152–174 (LLIMTFFQVTLFTVNEFILLNLI) form a helical membrane-spanning segment. Topologically, residues 175–179 (EAKDA) are extracellular. A helical membrane pass occupies residues 180 to 200 (GGSMTIHTFGAYFGLTVTWIL). Residues 201–219 (YRKNLEQSKQRQSSVYHSD) are Cytoplasmic-facing. The chain crosses the membrane as a helical span at residues 220–240 (LFAMIGTLFLWIYWPSFNSAS). At 241–251 (SFHGDTQHRAA) the chain is on the extracellular side. The helical transmembrane segment at 252 to 272 (LNTYLSLAASVLTTVAVSSVI) threads the bilayer. Topologically, residues 273–282 (HKKGKLDMVH) are cytoplasmic. The helical transmembrane segment at 283 to 303 (IQNATLAGGVGVGTAAEMMLT) threads the bilayer. Position 304 (Pro-304) is a topological domain, extracellular. The chain crosses the membrane as a helical span at residues 305–325 (YGALIVGFFCGILSTLGFAYL). Residues 326-340 (SPFLESRLRIQDTCG) are Cytoplasmic-facing. A helical membrane pass occupies residues 341–361 (IHNLHGIPGIIGGIVGAVTAA). At 362 to 395 (YSSPDVYGEPGIVHSFGFGGYKADWTKRMQGRSQ) the chain is on the extracellular side. The chain crosses the membrane as a helical span at residues 396–416 (IFGLLLSLAMALVGGIIVGFI). Topologically, residues 417–497 (LKLPFWGQAS…ATVTSSSLVH (81 aa)) are cytoplasmic.

It belongs to the ammonium transporter (TC 2.A.49) family. Rh subfamily. In terms of assembly, homotrimer. Post-translationally, N-glycosylated. As to expression, expressed by connecting tubule cells and intercalated cells of the collecting duct in kidney (at protein level).

The protein resides in the cell membrane. The protein localises to the apical cell membrane. The enzyme catalyses NH4(+)(in) = NH4(+)(out). It carries out the reaction methylamine(out) = methylamine(in). The catalysed reaction is CO2(out) = CO2(in). In terms of biological role, ammonium transporter involved in the maintenance of acid-base homeostasis. Transports ammonium and its related derivative methylammonium across the plasma membrane of epithelial cells likely contributing to renal transepithelial ammonia transport and ammonia metabolism. Postulated to primarily mediate an electroneutral bidirectional transport of NH3 ammonia species according to a mechanism that implies interaction of an NH4(+) ion with acidic residues of the pore entry followed by dissociation of NH4(+) into NH3 and H(+). As a result NH3 transits through the central pore and is protonated on the extracellular side reforming NH4(+). May act as a CO2 channel providing for renal acid secretion. The protein is Ammonium transporter Rh type C (Rhcg) of Rattus norvegicus (Rat).